Reading from the N-terminus, the 120-residue chain is U15-barytoxin-Tl1c (120 aa).

Positions 1-16 (MKLFMVLVASFAFAVA) are cleaved as a signal peptide. 4 disulfides stabilise this stretch: Cys-55/Cys-73, Cys-66/Cys-79, Cys-70/Cys-118, and Cys-72/Cys-89.

Belongs to the neurotoxin 03 (Tx2) family. 03 subfamily. In terms of tissue distribution, expressed by the venom gland.

It is found in the secreted. In terms of biological role, ion channel inhibitor. The chain is U15-barytoxin-Tl1c from Trittame loki (Brush-footed trapdoor spider).